Here is a 549-residue protein sequence, read N- to C-terminus: Cytochrome bc1 complex cytochrome b subunit (549 aa).

A helical transmembrane segment spans residues 45 to 65 (FLLGEIALYSFVVLLITGVYL). The heme site is built by histidine 114 and histidine 128. A run of 3 helical transmembrane segments spans residues 118–138 (ALMFAAAIMVHLARIFFTGAF), 146–166 (WVIGSLLLILAMFEGYFGYSL), and 189–209 (VIGTWLHWALFGGDFPGTILI). Heme is bound by residues histidine 216 and histidine 231. A run of 5 helical transmembrane segments spans residues 217-237 (ILLLPGIILALIGLHLALVWF), 266-286 (SGAFFAAIVGVLGLMGGLLQI), 335-355 (PVWVAVIMGLVFVLLPAYPFL), 381-401 (IGAMAIAFYMVLTLAAMNDII), and 418-438 (IGMVILPPFVYFITYRWCIGL).

Belongs to the cytochrome b family. As to quaternary structure, the cytochrome bc1 complex is composed of a cytochrome b (QcrB), the Rieske iron-sulfur protein (QcrA) and a diheme cytochrome c (QcrC) subunit. Heme is required as a cofactor.

The protein localises to the cell membrane. It carries out the reaction a quinol + 2 Fe(III)-[cytochrome c](out) = a quinone + 2 Fe(II)-[cytochrome c](out) + 2 H(+)(out). Its function is as follows. Cytochrome b subunit of the cytochrome bc1 complex, an essential component of the respiratory electron transport chain required for ATP synthesis. The bc1 complex catalyzes the oxidation of ubiquinol and the reduction of cytochrome c in the respiratory chain. The bc1 complex operates through a Q-cycle mechanism that couples electron transfer to generation of the proton gradient that drives ATP synthesis. The cytochrome b subunit contains two ubiquinol reactive sites: the oxidation (QP) site and the reduction (QN) site. The polypeptide is Cytochrome bc1 complex cytochrome b subunit (qcrB) (Mycobacterium bovis (strain ATCC BAA-935 / AF2122/97)).